We begin with the raw amino-acid sequence, 383 residues long: Adaptive-response sensory kinase SasA (383 aa).

The 214-residue stretch at 152–365 (MVAHELRTPL…CFTFNVPIWQ (214 aa)) folds into the Histidine kinase domain. His-155 carries the post-translational modification Phosphohistidine; by autocatalysis.

In terms of assembly, homooligomerizes. Interacts with KaiC. Participates in the KaiABC clock complex, whose core is composed of a KaiC homohexamer, 6 KaiB and up to 6 KaiA dimers. SasA and KaiB(fs) compete to bind to KaiC.

The catalysed reaction is ATP + protein L-histidine = ADP + protein N-phospho-L-histidine.. Member of the two-component regulatory system SasA/RpaA involved in genome-wide circadian gene expression. One of several clock output pathways. Participates in the Kai clock protein complex, the main circadian regulator in cyanobacteria, via its interaction with KaiC. KaiC enhances the autophosphorylation activity of SasA, which then transfers its phosphate group to RpaA to activate it. In addition to its output function, recruits fold-shifted KaiB (KaiB(fs)) to KaiC to cooperatively form the KaiB(6):KaiC(6) complex (independent of SasA kinase activity). Required for robustness of the circadian rhythm of gene expression and is involved in clock output, also required for adaptation to light/dark cycles. The polypeptide is Adaptive-response sensory kinase SasA (Synechococcus sp. (strain CC9311)).